The sequence spans 54 residues: Glutathione S-transferase 6.7 (54 aa).

Belongs to the GST superfamily. Theta family. In terms of assembly, homodimer. In terms of processing, the N-terminus is blocked.

The protein resides in the cytoplasm. It catalyses the reaction RX + glutathione = an S-substituted glutathione + a halide anion + H(+). In terms of biological role, conjugation of reduced glutathione to a wide number of exogenous and endogenous hydrophobic electrophiles. This is Glutathione S-transferase 6.7 from Dicentrarchus labrax (European seabass).